A 487-amino-acid polypeptide reads, in one-letter code: Homoserine O-acetyltransferase (487 aa).

An AB hydrolase-1 domain is found at 45–352; sequence NVILVCHPLT…PHGHDGFLLE (308 aa). The active-site Nucleophile is the Ser-150. Residue Arg-219 participates in substrate binding. Catalysis depends on residues Asp-313 and His-346. Position 347 (Asp-347) interacts with substrate. CBS domains lie at 373-430 and 434-487; these read MTNN…FQDL and MTKD…EVLQ.

Belongs to the AB hydrolase superfamily. MetX family. In terms of assembly, homodimer.

The protein resides in the cytoplasm. It catalyses the reaction L-homoserine + acetyl-CoA = O-acetyl-L-homoserine + CoA. It participates in amino-acid biosynthesis; L-methionine biosynthesis via de novo pathway; O-acetyl-L-homoserine from L-homoserine: step 1/1. Functionally, transfers an acetyl group from acetyl-CoA to L-homoserine, forming acetyl-L-homoserine. The protein is Homoserine O-acetyltransferase of Methanocorpusculum labreanum (strain ATCC 43576 / DSM 4855 / Z).